A 189-amino-acid chain; its full sequence is Holliday junction branch migration complex subunit RuvA (189 aa).

Residues Met-1–Leu-63 form a domain I region. The interval Glu-64–Asp-135 is domain II. Residues Asp-135–Asn-139 are flexible linker. Residues Glu-140 to Arg-189 form a domain III region.

This sequence belongs to the RuvA family. As to quaternary structure, homotetramer. Forms an RuvA(8)-RuvB(12)-Holliday junction (HJ) complex. HJ DNA is sandwiched between 2 RuvA tetramers; dsDNA enters through RuvA and exits via RuvB. An RuvB hexamer assembles on each DNA strand where it exits the tetramer. Each RuvB hexamer is contacted by two RuvA subunits (via domain III) on 2 adjacent RuvB subunits; this complex drives branch migration. In the full resolvosome a probable DNA-RuvA(4)-RuvB(12)-RuvC(2) complex forms which resolves the HJ.

It localises to the cytoplasm. The RuvA-RuvB-RuvC complex processes Holliday junction (HJ) DNA during genetic recombination and DNA repair, while the RuvA-RuvB complex plays an important role in the rescue of blocked DNA replication forks via replication fork reversal (RFR). RuvA specifically binds to HJ cruciform DNA, conferring on it an open structure. The RuvB hexamer acts as an ATP-dependent pump, pulling dsDNA into and through the RuvAB complex. HJ branch migration allows RuvC to scan DNA until it finds its consensus sequence, where it cleaves and resolves the cruciform DNA. This is Holliday junction branch migration complex subunit RuvA from Thermosipho africanus (strain TCF52B).